Here is a 245-residue protein sequence, read N- to C-terminus: Terpene cyclase prhH (245 aa).

7 helical membrane passes run 17-37, 51-71, 76-96, 113-133, 138-158, 170-190, and 205-225; these read ILAISEVLKVVAAVGWSVNYI, IGILPLCCDIGWEFVYAWMFP, HWQGVVRVWFFLHSAVLLVTL, IVFIYIFVTLVFGAGQYALAA, ALGFHWGGALCQFLSSSCGIA, SYLIWFARAISTFAGFIKLCI, and PMCWFYIVTVLSFDAAYPFLY.

Belongs to the paxB family.

It is found in the membrane. Its pathway is secondary metabolite biosynthesis; terpenoid biosynthesis. Functionally, terpene cyclase; part of the gene cluster that mediates the biosynthesis of paraherquonin, a meroterpenoid with a unique, highly congested hexacyclic molecular architecture. The first step of the pathway is the synthesis of 3,5-dimethylorsellinic acid (DMOA) by the polyketide synthase prhL. Synthesis of DMOA is followed by farnesylation by the prenyltransferase prhE, methylesterification by the methyl-transferase prhM, epoxidation of the prenyl chain by the flavin-dependent monooxygenase prhF, and cyclization of the farnesyl moiety by the terpene cyclase prhH, to yield the tetracyclic intermediate, protoaustinoid A. The short chain dehydrogenase prhI then oxidizes the C-3 alcohol group of the terpene cyclase product to transform protoaustinoid A into protoaustinoid B. The FAD-binding monooxygenase prhJ catalyzes the oxidation of protoaustinoid B into preaustinoid A which is further oxidized into preaustinoid A1 by FAD-binding monooxygenase phrK. Finally, prhA leads to berkeleydione via the berkeleyone B intermediate. PrhA is a multifunctional dioxygenase that first desaturates at C5-C6 to form berkeleyone B, followed by rearrangement of the A/B-ring to form the cycloheptadiene moiety in berkeleydione. Berkeleydione serves as the key intermediate for the biosynthesis of paraherquonin as well as many other meroterpenoids. The cytochrome P450 monooxygenases prhB, prhD, and prhN, as well as the isomerase prhC, are probably involved in the late stage of paraherquonin biosynthesis, after the production of berkeleydione. Especially prhC might be a multifunctional enzyme that catalyzes the D-ring expansion via intramolecular methoxy rearrangement, as well as the hydrolysis of the expanded D-ring. The sequence is that of Terpene cyclase prhH from Penicillium brasilianum.